The primary structure comprises 554 residues: Wee1-like protein kinase 2-B (554 aa).

2 disordered regions span residues 1–86 and 145–182; these read MRMA…GGEC and TLVNVNPFTPQSYRQTHFQPNGKRKERPEDDCSSDSQM. Ser38 is modified (phosphoserine). Polar residues-rich tracts occupy residues 38–48 and 147–163; these read SPVSSWRTNNC and VNVNPFTPQSYRQTHFQ. A Protein kinase domain is found at 213-487; sequence FLEIEKIGAG…AKNSVLRRCV (275 aa). Residues 219-227 and Lys242 contribute to the ATP site; that span reads IGAGEFGSV. Catalysis depends on Asp340, which acts as the Proton acceptor. The Mg(2+) site is built by Asn345 and Asp377. Residues 490–516 are a coiled coil; it reads AAELQKQLNVEKFKTAMLERELQAAKL.

The protein belongs to the protein kinase superfamily. Ser/Thr protein kinase family. WEE1 subfamily. In terms of assembly, interacts with cdca3. Post-translationally, ubiquitinated and degraded at the onset of G2/M phase. In terms of processing, phosphorylated during M and G1 phases. Interacts with cdca3 when phosphorylated at Ser-38.

It is found in the nucleus. It carries out the reaction L-tyrosyl-[protein] + ATP = O-phospho-L-tyrosyl-[protein] + ADP + H(+). In terms of biological role, oocyte and early embryo-specific protein tyrosine kinase that phosphorylates and inhibits cdk1 and acts as a regulator of meiosis in oocytes. Required to ensure the meiotic cell cycle in oocytes by phosphorylating cdk1 at 'Tyr-15', leading to inhibit cdk1 activity and prevent meiosis. The polypeptide is Wee1-like protein kinase 2-B (wee2-b) (Xenopus laevis (African clawed frog)).